A 438-amino-acid chain; its full sequence is Glutamate-1-semialdehyde 2,1-aminomutase (438 aa).

N6-(pyridoxal phosphate)lysine is present on K272.

It belongs to the class-III pyridoxal-phosphate-dependent aminotransferase family. HemL subfamily. In terms of assembly, homodimer. Pyridoxal 5'-phosphate serves as cofactor.

The protein resides in the cytoplasm. The enzyme catalyses (S)-4-amino-5-oxopentanoate = 5-aminolevulinate. Its pathway is porphyrin-containing compound metabolism; protoporphyrin-IX biosynthesis; 5-aminolevulinate from L-glutamyl-tRNA(Glu): step 2/2. It participates in porphyrin-containing compound metabolism; chlorophyll biosynthesis. The polypeptide is Glutamate-1-semialdehyde 2,1-aminomutase (Chloroflexus aggregans (strain MD-66 / DSM 9485)).